The sequence spans 89 residues: MPLDTTTKQKLINVHQTHSTDTGSVEVQVAMLTERISKLSGHLQQNKHDFSSRQGLLKMIGRRKRLLNYLRSLGEDRYSQLINKLGIRG.

The protein belongs to the universal ribosomal protein uS15 family. As to quaternary structure, part of the 30S ribosomal subunit.

Its subcellular location is the plastid. The protein resides in the organellar chromatophore. The chain is Small ribosomal subunit protein uS15c (rps15) from Paulinella chromatophora.